Consider the following 300-residue polypeptide: Acetylglutamate kinase (300 aa).

Substrate contacts are provided by residues 73–74, arginine 95, and asparagine 197; that span reads GG.

The protein belongs to the acetylglutamate kinase family. ArgB subfamily.

It localises to the cytoplasm. The enzyme catalyses N-acetyl-L-glutamate + ATP = N-acetyl-L-glutamyl 5-phosphate + ADP. It participates in amino-acid biosynthesis; L-arginine biosynthesis; N(2)-acetyl-L-ornithine from L-glutamate: step 2/4. Functionally, catalyzes the ATP-dependent phosphorylation of N-acetyl-L-glutamate. The polypeptide is Acetylglutamate kinase (Bordetella parapertussis (strain 12822 / ATCC BAA-587 / NCTC 13253)).